Here is a 334-residue protein sequence, read N- to C-terminus: N-acetyl-gamma-glutamyl-phosphate reductase (334 aa).

C149 is a catalytic residue.

Belongs to the NAGSA dehydrogenase family. Type 1 subfamily.

The protein localises to the cytoplasm. It carries out the reaction N-acetyl-L-glutamate 5-semialdehyde + phosphate + NADP(+) = N-acetyl-L-glutamyl 5-phosphate + NADPH + H(+). Its pathway is amino-acid biosynthesis; L-arginine biosynthesis; N(2)-acetyl-L-ornithine from L-glutamate: step 3/4. Functionally, catalyzes the NADPH-dependent reduction of N-acetyl-5-glutamyl phosphate to yield N-acetyl-L-glutamate 5-semialdehyde. The protein is N-acetyl-gamma-glutamyl-phosphate reductase of Sulfurimonas denitrificans (strain ATCC 33889 / DSM 1251) (Thiomicrospira denitrificans (strain ATCC 33889 / DSM 1251)).